Consider the following 80-residue polypeptide: Translation initiation factor IF-1 (80 aa).

Residues 6-80 (EKKKKDESDS…TSRGRIVYRR (75 aa)) enclose the S1-like domain.

It belongs to the IF-1 family. As to quaternary structure, component of the 30S ribosomal translation pre-initiation complex which assembles on the 30S ribosome in the order IF-2 and IF-3, IF-1 and N-formylmethionyl-tRNA(fMet); mRNA recruitment can occur at any time during PIC assembly.

The protein resides in the cytoplasm. Functionally, one of the essential components for the initiation of protein synthesis. Stabilizes the binding of IF-2 and IF-3 on the 30S subunit to which N-formylmethionyl-tRNA(fMet) subsequently binds. Helps modulate mRNA selection, yielding the 30S pre-initiation complex (PIC). Upon addition of the 50S ribosomal subunit IF-1, IF-2 and IF-3 are released leaving the mature 70S translation initiation complex. This chain is Translation initiation factor IF-1, found in Deinococcus radiodurans (strain ATCC 13939 / DSM 20539 / JCM 16871 / CCUG 27074 / LMG 4051 / NBRC 15346 / NCIMB 9279 / VKM B-1422 / R1).